The sequence spans 168 residues: Peroxynitrite isomerase (168 aa).

A GXWXGXG motif is present at residues 25–31; that stretch reads GTWRGAG. A heme b-binding site is contributed by H160.

The protein belongs to the nitrobindin family. As to quaternary structure, homodimer. Heme b is required as a cofactor.

The catalysed reaction is peroxynitrite = nitrate. Its pathway is nitrogen metabolism. Functionally, heme-binding protein able to scavenge peroxynitrite and to protect free L-tyrosine against peroxynitrite-mediated nitration, by acting as a peroxynitrite isomerase that converts peroxynitrite to nitrate. Therefore, this protein likely plays a role in peroxynitrite sensing and in the detoxification of reactive nitrogen and oxygen species (RNS and ROS, respectively). Is able to bind nitric oxide (NO) in vitro, but may act as a sensor of peroxynitrite levels in vivo. This chain is Peroxynitrite isomerase, found in Nocardia farcinica (strain IFM 10152).